A 153-amino-acid chain; its full sequence is Catabolic 3-dehydroquinase (153 aa).

Tyr24 functions as the Proton acceptor in the catalytic mechanism. Positions 75, 81, and 88 each coordinate substrate. The Proton donor role is filled by His101. Substrate contacts are provided by residues 102–103 (VS) and Arg112.

It belongs to the type-II 3-dehydroquinase family. Homododecamer. Adopts a ring-like structure, composed of an arrangement of two hexameric rings stacked on top of one another.

It catalyses the reaction 3-dehydroquinate = 3-dehydroshikimate + H2O. It participates in aromatic compound metabolism; 3,4-dihydroxybenzoate biosynthesis; 3,4-dihydroxybenzoate from 3-dehydroquinate: step 1/2. Is involved in the catabolism of quinate. Allows the utilization of quinate as carbon source via the beta-ketoadipate pathway. This Aspergillus oryzae (strain ATCC 42149 / RIB 40) (Yellow koji mold) protein is Catabolic 3-dehydroquinase.